The primary structure comprises 388 residues: P2X purinoceptor 4 (388 aa).

Residues 1-33 (MAGCCSVLGSFLFEYDTPRIVLIRSRKVGLMNR) lie on the Cytoplasmic side of the membrane. A helical transmembrane segment spans residues 34–54 (VVQLLILAYVIGWVFVWEKGY). The Extracellular segment spans residues 55–338 (QETDSVVSSV…KFDIIPTMIN (284 aa)). Positions 67 and 69 each coordinate ATP. CTP-binding residues include Lys67 and Lys69. 5 N-linked (GlcNAc...) asparagine glycosylation sites follow: Asn75, Asn110, Asn131, Asn153, and Asn184. Cystine bridges form between Cys116/Cys165, Cys126/Cys149, and Cys132/Cys159. Residues Thr186 and Leu188 each coordinate ATP. Thr186 is a CTP binding site. 2 N-linked (GlcNAc...) asparagine glycosylation sites follow: Asn199 and Asn208. 2 disulfides stabilise this stretch: Cys217–Cys227 and Cys261–Cys270. ATP-binding residues include Asn293, Arg295, and Lys313. CTP contacts are provided by Asn293, Arg295, and Lys313. The chain crosses the membrane as a helical span at residues 339–359 (VGSGLALLGVATVLCDVIVLY). Residues 360–388 (CMKKRYYYRDKKYKYVEDYEQGLSGEMNQ) are Cytoplasmic-facing.

Belongs to the P2X receptor family. As to quaternary structure, functional P2RXs are organized as homomeric and heteromeric trimers. Functional P2XRs are organized as homomeric and heteromeric trimers. Forms heterotrimer with P2RX1. Interacts with P2RX7 (via C-terminus); this interaction is functional only in the presence of ATP. Forms heterotrimer with P2RX4; functional differences between homomeric P2RX4 and P2RX4/6 heterotrimer are minor. Interacts with AP1M2.

It localises to the cell membrane. Its subcellular location is the lysosome membrane. The catalysed reaction is K(+)(in) = K(+)(out). It catalyses the reaction Na(+)(in) = Na(+)(out). It carries out the reaction Ca(2+)(in) = Ca(2+)(out). With respect to regulation, activated by ATP. pH-dependent and inhibited by acidic pH. In terms of biological role, ATP-gated nonselective transmembrane cation channel permeable to potassium, sodium and calcium. CTP, but not GTP or UTP, functions as a weak affinity agonist for P2RX4. Activated by extracellularly released ATP, it plays multiple role in immunity and central nervous system physiology. Plays a key role in initial steps of T-cell activation and Ca(2+) microdomain formation. Also participates in basal T-cell activity without TCR/CD3 stimulation. Promotes the differentiation and activation of Th17 cells via expression of retinoic acid-related orphan receptor C/RORC. Upon activation, drives microglia motility via the PI3K/Akt pathway. Could also function as an ATP-gated cation channel of lysosomal membranes. The sequence is that of P2X purinoceptor 4 (P2rx4) from Mus musculus (Mouse).